The following is a 426-amino-acid chain: Lactate racemase (426 aa).

72-75 (DHTR) lines the Ni(II)-pyridinium-3,5-bisthiocarboxylate mononucleotide pocket. Catalysis depends on proton donor/acceptor residues H108 and H174. Residues K184 and H200 each contribute to the Ni(II)-pyridinium-3,5-bisthiocarboxylate mononucleotide site. Substrate contacts are provided by Q295 and K298.

The protein belongs to the lactate racemase family. As to quaternary structure, homodimer. The cofactor is Ni(II)-pyridinium-3,5-bisthiocarboxylate mononucleotide.

It catalyses the reaction (S)-lactate = (R)-lactate. With respect to regulation, activation of the apo-enzyme requires the three accessory proteins LarB, LarE and LarC, that are involved in the biosynthesis of the nickel-pincer cofactor of LarA. In terms of biological role, catalyzes the interconversion between the D- and L-isomers of lactate. The polypeptide is Lactate racemase (Thermoanaerobacterium thermosaccharolyticum (strain ATCC 7956 / DSM 571 / NCIMB 9385 / NCA 3814 / NCTC 13789 / WDCM 00135 / 2032) (Clostridium thermosaccharolyticum)).